Here is a 502-residue protein sequence, read N- to C-terminus: uncharacterized protein (502 aa).

Transmembrane regions (helical) follow at residues 10–30 (NLTL…IXIF) and 473–493 (FSLI…FGLV).

The protein resides in the cell membrane. This is an uncharacterized protein from Borreliella burgdorferi (strain ATCC 35210 / DSM 4680 / CIP 102532 / B31) (Borrelia burgdorferi).